The primary structure comprises 430 residues: Serine--tRNA ligase (430 aa).

L-serine is bound at residue 237-239; sequence TAE. Residue 268 to 270 participates in ATP binding; it reads RSE. Glu-291 contacts L-serine. 355–358 provides a ligand contact to ATP; that stretch reads EISS. An L-serine-binding site is contributed by Ser-391.

The protein belongs to the class-II aminoacyl-tRNA synthetase family. Type-1 seryl-tRNA synthetase subfamily. In terms of assembly, homodimer. The tRNA molecule binds across the dimer.

Its subcellular location is the cytoplasm. The enzyme catalyses tRNA(Ser) + L-serine + ATP = L-seryl-tRNA(Ser) + AMP + diphosphate + H(+). It carries out the reaction tRNA(Sec) + L-serine + ATP = L-seryl-tRNA(Sec) + AMP + diphosphate + H(+). The protein operates within aminoacyl-tRNA biosynthesis; selenocysteinyl-tRNA(Sec) biosynthesis; L-seryl-tRNA(Sec) from L-serine and tRNA(Sec): step 1/1. Catalyzes the attachment of serine to tRNA(Ser). Is also able to aminoacylate tRNA(Sec) with serine, to form the misacylated tRNA L-seryl-tRNA(Sec), which will be further converted into selenocysteinyl-tRNA(Sec). The chain is Serine--tRNA ligase from Salmonella enteritidis PT4 (strain P125109).